The primary structure comprises 227 residues: UPF0173 metal-dependent hydrolase DR_0006 (227 aa).

It belongs to the UPF0173 family.

The sequence is that of UPF0173 metal-dependent hydrolase DR_0006 from Deinococcus radiodurans (strain ATCC 13939 / DSM 20539 / JCM 16871 / CCUG 27074 / LMG 4051 / NBRC 15346 / NCIMB 9279 / VKM B-1422 / R1).